The following is a 361-amino-acid chain: MANSAPENVHPQKAFGWAARDTSGTLSPLKFSRRATGEQDVTFKVLYCGICHSDLHYIKNEWGNAVYPAIPGHEIVGVVTEVGNKVQNFKVGDKVGVGCMVGSCRSCESCENHLENYCPKMILTYGSTYYDGTLTYGGYSDIMVVEEHFAVRIPDNMALDATAPLLCAGVTVYSPLKHFELDKPGLHIGVVGLGGLGHMAVKFGKAFGAKVTVISTSPNKKDEAVNRLGADSFVVSREPEQMQSAMGTLDGIIDTVSAAHPLLPLLGLLKSQGKMIMVGVPDKPLELPVFPLLQGRKILAGSCIGGMKETQEMIDFAAKHDIKSDIEVVPMDYVNTAMERLLKGDVRYRFVIDVANTLKAE.

Residues cysteine 51, histidine 73, cysteine 104, cysteine 107, cysteine 110, cysteine 118, and cysteine 167 each coordinate Zn(2+).

Belongs to the zinc-containing alcohol dehydrogenase family. It depends on Zn(2+) as a cofactor.

The catalysed reaction is D-mannitol + NAD(+) = D-mannose + NADH + H(+). Functionally, oxidizes mannitol to mannose. Provides the initial step by which translocated mannitol is committed to central metabolism and, by regulating mannitol pool size, is important in regulating salt tolerance at the cellular level. The polypeptide is Probable mannitol dehydrogenase (ELI3) (Mesembryanthemum crystallinum (Common ice plant)).